The sequence spans 745 residues: F-box only protein 30 (745 aa).

Residues 48 to 109 form a TRAF-type zinc finger; it reads EHRLLCPFER…SYADRKSYEN (62 aa). Disordered regions lie at residues 211-231 and 305-324; these read NTSV…LEDQ and GDSK…SDGT. The span at 222–231 shows a compositional bias: basic and acidic residues; the sequence is QNARESLEDQ. Over residues 305 to 314 the composition is skewed to polar residues; sequence GDSKQSNLTN. Residues 610 to 658 enclose the F-box domain; the sequence is NDHLSSLPFEVLQHIAGFLDGFSLCQLSCVSKLMRDVCGSLLQSRGMVI.

Part of a SCF (SKP1-cullin-F-box) protein ligase complex. Interacts with SKP1, CUL1 and RBX1/ROC1. In terms of processing, auto-ubiquitinated. May be neddylated. Neddylation may be required for E3 ligase activity.

It functions in the pathway protein modification; protein ubiquitination. Functionally, substrate-recognition component of the SCF (SKP1-CUL1-F-box protein)-type E3 ubiquitin ligase complex. Required for muscle atrophy following denervation. This Homo sapiens (Human) protein is F-box only protein 30 (FBXO30).